The primary structure comprises 113 residues: MSAIQNLHSFDPFADASKGDDLLPAGTEDYIHIRIQQRNGRKTLTTVQGIADDYDKKKLVKAFKKKFACNGTVIEHPEYGEVIQLQGDQRKNICQFLIEIGLAKDDQLKVHGF.

Ser2 carries the N-acetylserine modification. Phosphoserine is present on residues Ser2 and Ser9.

This sequence belongs to the SUI1 family. As to quaternary structure, component of the 43S pre-initiation complex (43S PIC), which is composed of the 40S ribosomal subunit, EIF1, eIF1A (EIF1AX), eIF3 complex, EIF5 and eIF2-GTP-initiator tRNA complex (eIF2 ternary complex). Interacts with EIF4G1; in specific 5'-UTR length and AUG context. Interacts with EIF5; which in a mutual exclusive interaction associates either with EIF1 or with EIF2S2 on a common binding site. Interacts with RENT2.

Its subcellular location is the cytoplasm. Functionally, component of the 43S pre-initiation complex (43S PIC), which binds to the mRNA cap-proximal region, scans mRNA 5'-untranslated region, and locates the initiation codon. Together with eIF1A (EIF1AX), EIF1 facilitates scanning and is essential for start codon recognition on the basis of AUG nucleotide context and location relative to the 5'-cap. Participates to initiation codon selection by influencing the conformation of the 40S ribosomal subunit and the positions of bound mRNA and initiator tRNA; this is possible after its binding to the interface surface of the platform of the 40S ribosomal subunit close to the P-site. Together with eIF1A (EIF1AX), also regulates the opening and closing of the mRNA binding channel, which ensures mRNA recruitment, scanning and the fidelity of initiation codon selection. Continuously monitors and protects against premature and partial base-pairing of codons in the 5'-UTR with the anticodon of initiator tRNA. Together with eIF1A (EIF1AX), acts for ribosomal scanning, promotion of the assembly of 48S complex at the initiation codon (43S PIC becomes 48S PIC after the start codon is reached), and dissociation of aberrant complexes. Interacts with EIF4G1, which in a mutual exclusive interaction associates either with EIF1 or with EIF4E on a common binding site. EIF4G1-EIF1 complex promotes ribosome scanning (on both short and long 5'UTR), leaky scanning (on short 5'UTR) which is the bypass of the initial start codon, and discrimination against cap-proximal AUG. Is probably maintained within the 43S PIC in open conformation thanks to eIF1A-EIF5 interaction. Once the correct start codon is reached, EIF1 is physically excluded from the decoding site, shifting the PIC into the closed conformation and arresting it at the start codon. The protein is Eukaryotic translation initiation factor 1 (Eif1) of Mus musculus (Mouse).